Reading from the N-terminus, the 354-residue chain is NADH-quinone oxidoreductase subunit H (354 aa).

8 helical membrane-spanning segments follow: residues 25–45 (LVRI…LILW), 91–111 (WLYL…WAVI), 126–146 (LLYA…AGWA), 170–190 (MGFA…SEIV), 205–225 (FLSW…ISGI), 253–273 (MAFA…SALA), 290–310 (FIPG…VFIW), and 330–350 (VFLP…MSPL).

Belongs to the complex I subunit 1 family. In terms of assembly, NDH-1 is composed of 14 different subunits. Subunits NuoA, H, J, K, L, M, N constitute the membrane sector of the complex.

It localises to the cell inner membrane. It carries out the reaction a quinone + NADH + 5 H(+)(in) = a quinol + NAD(+) + 4 H(+)(out). Its function is as follows. NDH-1 shuttles electrons from NADH, via FMN and iron-sulfur (Fe-S) centers, to quinones in the respiratory chain. The immediate electron acceptor for the enzyme in this species is believed to be ubiquinone. Couples the redox reaction to proton translocation (for every two electrons transferred, four hydrogen ions are translocated across the cytoplasmic membrane), and thus conserves the redox energy in a proton gradient. This subunit may bind ubiquinone. This is NADH-quinone oxidoreductase subunit H from Burkholderia thailandensis (strain ATCC 700388 / DSM 13276 / CCUG 48851 / CIP 106301 / E264).